The chain runs to 606 residues: MSDTSESGAGLTRFQAEASEKDSSSMMQTLLTVTQNVEVPETPKASKALEVSEDVKVSKASGVSKATEVSKTPEAREAPATQASSTTQLTDTQVLAAENKSLAADTKKQNADPQAVTMPATETKKVSHVADTKVNTKAQETEAAPSQAPADEPEPESAAAQSQENQDTRPKVKAKKARKVKHLDGEEDGSSDQSQASGTTGGRRVSKALMASMARRASRGPIAFWARRASRTRLAAWARRALLSLRSPKARRGKARRRAAKLQSSQEPEAPPPRDVALLQGRANDLVKYLLAKDQTKIPIKRSDMLKDIIKEYTDVYPEIIERAGYSLEKVFGIQLKEIDKNDHLYILLSTLEPTDAGILGTTKDSPKLGLLMVLLSIIFMNGNRSSEAVIWEVLRKLGLRPGIHHSLFGDVKKLITDEFVKQKYLDYARVPNSNPPEYEFFWGLRSYYETSKMKVLKFACKVQKKDPKEWAAQYREAMEADLKAAAEAAAEAKARAEIRARMGIGLGSENAAGPCNWDEADIGPWAKARIQAGAEAKAKAQESGSASTGASTSTNNSASASASTSGGFSAGASLTATLTFGLFAGLGGAGASTSGSSGACGFSYK.

Residues 1–204 (MSDTSESGAG…QASGTTGGRR (204 aa)) are disordered. At serine 2 the chain carries N-acetylserine. Serine 5 is subject to Phosphoserine. The span at 24–37 (SSMMQTLLTVTQNV) shows a compositional bias: polar residues. The residue at position 72 (threonine 72) is a Phosphothreonine. The segment covering 81–93 (TQASSTTQLTDTQ) has biased composition (polar residues). Residues 122-131 (ETKKVSHVAD) are compositionally biased toward basic and acidic residues. The span at 142 to 164 (EAAPSQAPADEPEPESAAAQSQE) shows a compositional bias: low complexity. Residue serine 157 is modified to Phosphoserine. Positions 171 to 181 (KVKAKKARKVK) are enriched in basic residues. Phosphoserine is present on residues serine 190, serine 191, serine 194, serine 197, serine 244, and serine 247. Over residues 248-260 (PKARRGKARRRAA) the composition is skewed to basic residues. The segment at 248–275 (PKARRGKARRRAAKLQSSQEPEAPPPRD) is disordered. Residues serine 264 and serine 265 each carry the phosphoserine modification. Residues 279–478 (LQGRANDLVK…KEWAAQYREA (200 aa)) enclose the MAGE domain. The segment at 534 to 563 (GAEAKAKAQESGSASTGASTSTNNSASASA) is disordered.

Interacts with GNAS. May interact with DNAJB1. Widely expressed. In the developing and adult kidney, expressed in the thick ascending limb of the loop of Henle and the distal convoluted tubules outside the loop.

Functionally, regulates the expression, localization to the plasma membrane and function of the sodium chloride cotransporters SLC12A1 and SLC12A3, two key components of salt reabsorption in the distal renal tubule. The sequence is that of Melanoma-associated antigen D2 (MAGED2) from Homo sapiens (Human).